Reading from the N-terminus, the 701-residue chain is Nucleolar transcription factor 1-B (701 aa).

The tract at residues 1 to 21 (MNGAAGGDTQGKMTAPKDQDQ) is disordered. 5 DNA-binding regions (HMG box) span residues 112–180 (PKKP…AKFR), 196–264 (PEKP…REYM), 298–362 (TKPP…MRFL), 422–489 (PETP…SDMR), and 508–574 (KKAP…DTWM). A disordered region spans residues 382-426 (MKRKRTNTPASKMATEDAAKVKSRSGQADKKKAAEERAKLPETPK). Over residues 408-426 (QADKKKAAEERAKLPETPK) the composition is skewed to basic and acidic residues. The interval 584 to 701 (AYKEQNTNKR…SADSSDSDSN (118 aa)) is disordered. Residues 597–612 (TKIQAPSSKSKLVIQS) are compositionally biased toward polar residues. Acidic residues predominate over residues 615–682 (DDDEDDEDDE…DNEEDDDDNE (68 aa)). Residues 683–695 (SGSSSSSSSSADS) are compositionally biased toward low complexity.

XUBF consists of 2 polypeptides of 82 and 85 kDa, encoded by the same or closely related genes.

It is found in the nucleus. Functionally, UBF recognizes the ribosomal RNA gene promotor and activates transcription mediated by RNA polymerase I through cooperative interactions with the species-specific factor SL1. It binds specifically to the upstream control element. This is Nucleolar transcription factor 1-B (ubtf-b) from Xenopus laevis (African clawed frog).